Reading from the N-terminus, the 382-residue chain is MGDWSALGKLLDKVQAYSTAGGKVWLSVLFIFRILLLGTAVESAWGDEQSAFRCNTQQPGCENVCYDKSFPISHVRFWVLQIIFVSVPTLLYLAHVFYVMRKEEKLNKKEEELKVAQTDGVNVEMHLKQIEIKKFKYGIEEHGKVKMRGGLLRTYIISILFKSVFEVAFLLIQWYIYGFSLSAVYTCKRDPCPHQVDCFLSRPTEKTIFIIFMLVVSLVSLALNIIELFYVFFKGVKDRVKGRSDPYHATTGPLSPSKDCGSPKYAYFNGCSSPTAPLSPMSPPGYKLVTGDRNNSSCRNYNKQASEQNWANYSAEQNRMGQAGSTISNSHAQPFDFPDDSQNAKKVAAGHELQPLAIVDQRPSSRASSRASSRPRPDDLEI.

The Cytoplasmic segment spans residues 2–23 (GDWSALGKLLDKVQAYSTAGGK). Ser-5 is modified (phosphoserine). A helical transmembrane segment spans residues 24-44 (VWLSVLFIFRILLLGTAVESA). Residues 45–76 (WGDEQSAFRCNTQQPGCENVCYDKSFPISHVR) lie on the Extracellular side of the membrane. 2 disulfide bridges follow: Cys-54–Cys-192 and Cys-187–Cys-198. The helical transmembrane segment at 77–97 (FWVLQIIFVSVPTLLYLAHVF) threads the bilayer. Residues 98-155 (YVMRKEEKLNKKEEELKVAQTDGVNVEMHLKQIEIKKFKYGIEEHGKVKMRGGLLRTY) lie on the Cytoplasmic side of the membrane. Lys-144 participates in a covalent cross-link: Glycyl lysine isopeptide (Lys-Gly) (interchain with G-Cter in SUMO). Residues 156 to 176 (IISILFKSVFEVAFLLIQWYI) traverse the membrane as a helical segment. Residues 177-207 (YGFSLSAVYTCKRDPCPHQVDCFLSRPTEKT) are Extracellular-facing. Residues 208–228 (IFIIFMLVVSLVSLALNIIEL) traverse the membrane as a helical segment. The Cytoplasmic segment spans residues 229-382 (FYVFFKGVKD…SRPRPDDLEI (154 aa)). Residue Lys-237 forms a Glycyl lysine isopeptide (Lys-Gly) (interchain with G-Cter in SUMO) linkage. The interval 244–382 (SDPYHATTGP…SRPRPDDLEI (139 aa)) is interaction with NOV. A Phosphotyrosine modification is found at Tyr-247. Residues Ser-255, Ser-257, and Ser-262 each carry the phosphoserine modification. Positions 264-382 (KYAYFNGCSS…SRPRPDDLEI (119 aa)) are interaction with UBQLN4. Cys-271 carries the post-translational modification S-nitrosocysteine. Thr-275 is subject to Phosphothreonine. Residues Ser-306, Ser-314, and Ser-325 each carry the phosphoserine modification. The segment covering 317–332 (QNRMGQAGSTISNSHA) has biased composition (polar residues). Residues 317–382 (QNRMGQAGST…SRPRPDDLEI (66 aa)) form a disordered region. Thr-326 is modified (phosphothreonine). Phosphoserine is present on residues Ser-328, Ser-330, Ser-341, and Ser-365. Positions 362–374 (RPSSRASSRASSR) are enriched in low complexity. At Ser-368 the chain carries Phosphoserine; by PKC/PRKCG and PKC/PRKCD. Ser-369 and Ser-373 each carry phosphoserine.

This sequence belongs to the connexin family. Alpha-type (group II) subfamily. As to quaternary structure, a connexon is composed of a hexamer of connexins. Interacts with CSNK1D. Interacts with RIC1/CIP150. Interacts (via C-terminus) with TJP1. Interacts (via C-terminus) with SRC (via SH3 domain). Interacts (not ubiquitinated) with UBQLN4 (via UBA domain). Interacts with CNST. Interacts with SGSM3. Interacts with NOV. Interacts with TMEM65. Interacts with ANK3/ANKG and PKP2. In terms of processing, phosphorylation at Ser-325, Ser-328 and Ser-330 by CK1 modulates gap junction assembly. Phosphorylated at Ser-368 by PRKCG; phosphorylation induces disassembly of gap junction plaques and inhibition of gap junction activity. Phosphorylation at Ser-368 by PRKCD triggers its internalization into small vesicles leading to proteasome-mediated degradation. Sumoylated with SUMO1, SUMO2 and SUMO3, which may regulate the level of functional Cx43 gap junctions at the plasma membrane. May be desumoylated by SENP1 or SENP2. Post-translationally, acetylated in the developing cortex; leading to delocalization from the cell membrane. In terms of processing, S-nitrosylation at Cys-271 is enriched at the muscle endothelial gap junction in arteries, it augments channel permeability and may regulate of smooth muscle cell to endothelial cell communication. In terms of tissue distribution, expressed in heart, non-sensory epithelial cells, and in fibrocytes of the spiral ligament and the spiral limbus. Expressed in bladder smooth muscle cells (at protein level). Expressed in astrocytes (at protein level).

The protein resides in the cell membrane. It is found in the cell junction. It localises to the gap junction. Its subcellular location is the endoplasmic reticulum. In terms of biological role, gap junction protein that acts as a regulator of bladder capacity. A gap junction consists of a cluster of closely packed pairs of transmembrane channels, the connexons, through which materials of low MW diffuse from one cell to a neighboring cell. Negative regulator of bladder functional capacity: acts by enhancing intercellular electrical and chemical transmission, thus sensitizing bladder muscles to cholinergic neural stimuli and causing them to contract. May play a role in cell growth inhibition through the regulation of NOV expression and localization. Plays an essential role in gap junction communication in the ventricles. Functionally, connexin 43 is possibly the ATP-induced pore of mouse macrophages. The sequence is that of Gap junction alpha-1 protein (Gja1) from Mus musculus (Mouse).